Here is a 585-residue protein sequence, read N- to C-terminus: Acetolactate synthase large subunit (585 aa).

Glutamate 60 serves as a coordination point for thiamine diphosphate. Residues arginine 162, 272–293, and 315–334 each bind FAD; these read HGTA…LGAR and DIDP…IISD. The tract at residues 407–486 is thiamine pyrophosphate binding; it reads QHQMWAAQFL…IKIFIINNQW (80 aa). 2 residues coordinate Mg(2+): aspartate 457 and asparagine 484.

The protein belongs to the TPP enzyme family. In terms of assembly, dimer of large and small chains. The cofactor is Mg(2+). Thiamine diphosphate serves as cofactor.

The protein resides in the plastid. The protein localises to the chloroplast. It carries out the reaction 2 pyruvate + H(+) = (2S)-2-acetolactate + CO2. It participates in amino-acid biosynthesis; L-isoleucine biosynthesis; L-isoleucine from 2-oxobutanoate: step 1/4. It functions in the pathway amino-acid biosynthesis; L-valine biosynthesis; L-valine from pyruvate: step 1/4. This chain is Acetolactate synthase large subunit (ilvB), found in Cyanidium caldarium (Red alga).